The sequence spans 293 residues: Large ribosomal subunit protein uL18 (293 aa).

A disordered region spans residues 249–273 (DASPAAKKAAKPSKRHTAKRLTYDE). Over residues 256 to 267 (KAAKPSKRHTAK) the composition is skewed to basic residues.

Belongs to the universal ribosomal protein uL18 family. Component of the large ribosomal subunit (LSU).

Its subcellular location is the cytoplasm. The protein localises to the nucleus. Functionally, component of the ribosome, a large ribonucleoprotein complex responsible for the synthesis of proteins in the cell. The small ribosomal subunit (SSU) binds messenger RNAs (mRNAs) and translates the encoded message by selecting cognate aminoacyl-transfer RNA (tRNA) molecules. The large subunit (LSU) contains the ribosomal catalytic site termed the peptidyl transferase center (PTC), which catalyzes the formation of peptide bonds, thereby polymerizing the amino acids delivered by tRNAs into a polypeptide chain. The nascent polypeptides leave the ribosome through a tunnel in the LSU and interact with protein factors that function in enzymatic processing, targeting, and the membrane insertion of nascent chains at the exit of the ribosomal tunnel. The chain is Large ribosomal subunit protein uL18 (rpl-5) from Caenorhabditis elegans.